Here is a 348-residue protein sequence, read N- to C-terminus: Selenide, water dikinase (348 aa).

The active site involves Cys17. ATP-binding positions include Lys20 and 48-50 (TRD). Residue Asp51 coordinates Mg(2+). Residues Asp68, Asp91, and 139–141 (GHS) each bind ATP. Residue Asp91 participates in Mg(2+) binding. Asp227 is a binding site for Mg(2+).

It belongs to the selenophosphate synthase 1 family. Class I subfamily. As to quaternary structure, homodimer. The cofactor is Mg(2+).

The enzyme catalyses hydrogenselenide + ATP + H2O = selenophosphate + AMP + phosphate + 2 H(+). Its function is as follows. Synthesizes selenophosphate from selenide and ATP. The polypeptide is Selenide, water dikinase (Yersinia pseudotuberculosis serotype I (strain IP32953)).